The primary structure comprises 454 residues: Methylenetetrahydrofolate--tRNA-(uracil-5-)-methyltransferase TrmFO (454 aa).

Position 9–14 (9–14) interacts with FAD; it reads GAGLAG. Positions 432–454 are disordered; it reads LERVSPPSRETGEPTGAEQVDLA.

It belongs to the MnmG family. TrmFO subfamily. FAD serves as cofactor.

It localises to the cytoplasm. The enzyme catalyses uridine(54) in tRNA + (6R)-5,10-methylene-5,6,7,8-tetrahydrofolate + NADH + H(+) = 5-methyluridine(54) in tRNA + (6S)-5,6,7,8-tetrahydrofolate + NAD(+). It carries out the reaction uridine(54) in tRNA + (6R)-5,10-methylene-5,6,7,8-tetrahydrofolate + NADPH + H(+) = 5-methyluridine(54) in tRNA + (6S)-5,6,7,8-tetrahydrofolate + NADP(+). Functionally, catalyzes the folate-dependent formation of 5-methyl-uridine at position 54 (M-5-U54) in all tRNAs. The chain is Methylenetetrahydrofolate--tRNA-(uracil-5-)-methyltransferase TrmFO from Pelobacter propionicus (strain DSM 2379 / NBRC 103807 / OttBd1).